The primary structure comprises 132 residues: Agouti-signaling protein (132 aa).

A signal peptide spans 1–22 (MDVTRLLLATLLVFLCFFTANS). Asparagine 39 carries N-linked (GlcNAc...) asparagine glycosylation. The disordered stretch occupies residues 61–87 (QIGRKEAEKKRSSKKEASMKKVARPRT). Basic and acidic residues predominate over residues 63 to 79 (GRKEAEKKRSSKKEASM). 5 cysteine pairs are disulfide-bonded: cysteine 93–cysteine 108, cysteine 100–cysteine 114, cysteine 107–cysteine 125, cysteine 111–cysteine 132, and cysteine 116–cysteine 123. The region spanning 93–132 (CVATRNSCKPPAPACCDPCASCQCRFFRSACSCRVLSLNC) is the Agouti domain.

It localises to the secreted. Involved in the regulation of melanogenesis. The binding of ASP to MC1R precludes alpha-MSH initiated signaling and thus blocks production of cAMP, leading to a down-regulation of eumelanogenesis (brown/black pigment) and thus increasing synthesis of pheomelanin (yellow/red pigment). The polypeptide is Agouti-signaling protein (ASIP) (Gorilla gorilla gorilla (Western lowland gorilla)).